The primary structure comprises 257 residues: Leucine-rich repeat-containing protein 3 (257 aa).

Positions 1–32 are cleaved as a signal peptide; sequence MGPRGRQSPSSPLAPSQGSCFFILFCLRLGAS. One can recognise an LRRNT domain in the interval 33-64; it reads CPQSCQCPDHAGAVAVHCSSRGLQEIPRDIPA. LRR repeat units lie at residues 65–86, 89–110, and 114–135; these read NTVL…AFQH, QLRE…AFSG, and GLRL…ALGK. The LRRCT domain maps to 145 to 198; the sequence is NPLHCECALQEALWELKLDPDSVDEIACHTSAQEQFVGKPLIQVLDSGASFCST. Residues 205–225 form a helical membrane-spanning segment; that stretch reads VAMLVTMFGWFTMVIAYVVYY.

Belongs to the LRRC3 family.

It localises to the membrane. The protein is Leucine-rich repeat-containing protein 3 (Lrrc3) of Rattus norvegicus (Rat).